The primary structure comprises 485 residues: Cobyric acid synthase (485 aa).

The 199-residue stretch at 250–448 (TQTVAVIAYP…LHGMFEDPRV (199 aa)) folds into the GATase cobBQ-type domain. Cysteine 334 serves as the catalytic Nucleophile. Histidine 440 is a catalytic residue.

This sequence belongs to the CobB/CobQ family. CobQ subfamily.

The protein operates within cofactor biosynthesis; adenosylcobalamin biosynthesis. Functionally, catalyzes amidations at positions B, D, E, and G on adenosylcobyrinic A,C-diamide. NH(2) groups are provided by glutamine, and one molecule of ATP is hydrogenolyzed for each amidation. This chain is Cobyric acid synthase, found in Polaromonas naphthalenivorans (strain CJ2).